A 209-amino-acid polypeptide reads, in one-letter code: Probable phosphatidylglycerophosphate synthase (209 aa).

The next 4 helical transmembrane spans lie at 32 to 52 (ILTL…FYGG), 105 to 125 (ALIG…LILT), 147 to 167 (WGGK…VLPL), and 171 to 191 (LHVA…ITGV).

The protein belongs to the CDP-alcohol phosphatidyltransferase class-I family.

It localises to the cell membrane. It catalyses the reaction a CDP-1,2-diacyl-sn-glycerol + sn-glycerol 3-phosphate = a 1,2-diacyl-sn-glycero-3-phospho-(1'-sn-glycero-3'-phosphate) + CMP + H(+). It functions in the pathway lipid metabolism; phospholipid metabolism. Probably catalyzes the synthesis of phosphatidylglycerophosphate by transferring a phosphatidyl group from CDP-diacylglycerol to glycerol 3-phosphate. This is Probable phosphatidylglycerophosphate synthase from Mycobacterium tuberculosis (strain CDC 1551 / Oshkosh).